An 84-amino-acid polypeptide reads, in one-letter code: Large ribosomal subunit protein bL27 (84 aa).

A disordered region spans residues 1–20; the sequence is MAHKKGGGSTKNGRDSNPKY.

Belongs to the bacterial ribosomal protein bL27 family.

This chain is Large ribosomal subunit protein bL27, found in Chlorobaculum tepidum (strain ATCC 49652 / DSM 12025 / NBRC 103806 / TLS) (Chlorobium tepidum).